Consider the following 155-residue polypeptide: Large ribosomal subunit protein uL22c (155 aa).

This sequence belongs to the universal ribosomal protein uL22 family. As to quaternary structure, part of the 50S ribosomal subunit.

The protein localises to the plastid. Its subcellular location is the chloroplast. In terms of biological role, this protein binds specifically to 23S rRNA. Functionally, the globular domain of the protein is located near the polypeptide exit tunnel on the outside of the subunit, while an extended beta-hairpin is found that lines the wall of the exit tunnel in the center of the 70S ribosome. This chain is Large ribosomal subunit protein uL22c (rpl22), found in Solanum tuberosum (Potato).